A 493-amino-acid chain; its full sequence is MGKSGLYFSLICFYTLFPSSFGNPSRCTLFIGASSYHSDPCGSNHPRCTWRLDLFSLTKDQSLSPPCPGLVTYSQYHKPYSLYVFPHWIAKPDRRGLGYYSASYSDPCAIQCPYLGCQSWTCPYTGPVSNPHWKYTSDLNFTQEVSSISLHLHFSKCGSSFSFLLDAPGYDPVWLLSSQATQIPPTPAPLIQDSDLQHILEPSIPWSSKILNLILLALKSTNYSCMVCVDRSSLSSWHVLYDPLKAPSSPDPQAQSILRPSLAIPASNITPPFPWTHCYRPPLQAISSENCNNSVILPPFSLSPIPDVSRPRKRRAVPIAIWLVSALAAGTGIAGGVTGSLSLASSKSLLREVDQDIDHLTRAIVKNHDNILRVAQYAAQNRRGLDLLFWEQGGLCKAIQEQCCFLNISNTHVSVLQERPPLEKRVITGWGLNWDLGLSQWAREALQTGITLLALFLLLIVVGPCVIRQLQTLPSRLQHRSQPYSLLNYETNL.

The N-terminal stretch at 1 to 22 is a signal peptide; that stretch reads MGKSGLYFSLICFYTLFPSSFG. Topologically, residues 23-446 are extracellular; sequence NPSRCTLFIG…GLSQWAREAL (424 aa). Residues Asn140 and Asn222 are each glycosylated (N-linked (GlcNAc...) asparagine; by host). The short motif at 225 to 228 is the CXXC element; it reads CMVC. Cystine bridges form between Cys225–Cys228, Cys225–Cys404, and Cys396–Cys403. Asn292 carries N-linked (GlcNAc...) asparagine; by host glycosylation. The fusion peptide stretch occupies residues 316–336; sequence AVPIAIWLVSALAAGTGIAGG. 2 coiled-coil regions span residues 344–390 and 400–432; these read ASSK…LLFW and QEQCCFLNISNTHVSVLQERPPLEKRVITGWGL. Residues 379–395 form an immunosuppression region; it reads AQNRRGLDLLFWEQGGL. Residues 396 to 404 carry the CX6CC motif; that stretch reads CKAIQEQCC. N-linked (GlcNAc...) asparagine; by host glycosylation is present at Asn407. The chain crosses the membrane as a helical span at residues 447–467; sequence QTGITLLALFLLLIVVGPCVI. Cys465 carries the S-palmitoyl cysteine; by host lipid modification. At 468–493 the chain is on the cytoplasmic side; it reads RQLQTLPSRLQHRSQPYSLLNYETNL.

The mature envelope protein (Env) consists of a trimer of SU-TM heterodimers attached by a labile interchain disulfide bond. Post-translationally, specific enzymatic cleavages in vivo yield mature proteins. Envelope glycoproteins are synthesized as an inactive precursor that is N-glycosylated and processed likely by host cell furin or by a furin-like protease in the Golgi to yield the mature SU and TM proteins. The cleavage site between SU and TM requires the minimal sequence [KR]-X-[KR]-R. The CXXC motif is highly conserved across a broad range of retroviral envelope proteins. It is thought to participate in the formation of a labile disulfide bond possibly with the CX6CC motif present in the transmembrane protein. Isomerization of the intersubunit disulfide bond to an SU intrachain disulfide bond is thought to occur upon receptor recognition in order to allow membrane fusion. In terms of processing, the transmembrane protein is palmitoylated.

The protein resides in the virion membrane. It localises to the host cell membrane. Functionally, the surface protein (SU) attaches the virus to the host cell by binding to its receptor. This interaction triggers the refolding of the transmembrane protein (TM) and is thought to activate its fusogenic potential by unmasking its fusion peptide. Fusion occurs at the host cell plasma membrane. The transmembrane protein (TM) acts as a class I viral fusion protein. Under the current model, the protein has at least 3 conformational states: pre-fusion native state, pre-hairpin intermediate state, and post-fusion hairpin state. During viral and target cell membrane fusion, the coiled coil regions (heptad repeats) assume a trimer-of-hairpins structure, positioning the fusion peptide in close proximity to the C-terminal region of the ectodomain. The formation of this structure appears to drive apposition and subsequent fusion of viral and target cell membranes. Membranes fusion leads to delivery of the nucleocapsid into the cytoplasm. The protein is Envelope glycoprotein gp63 (env) of Human T-cell leukemia virus 3 (strain Pyl43) (HTLV-3).